The primary structure comprises 438 residues: Death-associated inhibitor of apoptosis 1 (438 aa).

Residues 44–110 form a BIR 1 repeat; sequence EETRLKTFTD…QRWSPNCPLL (67 aa). The tract at residues 194-213 is disordered; sequence TATQATGDVQPETCRPSAAS. A BIR 2 repeat occupies 226 to 293; that stretch reads ETARLRTFEA…ALWLSQCRFV (68 aa). 4 residues coordinate Zn(2+): C263, C266, H283, and C290. Residues 322 to 346 are disordered; it reads GGVAVASTQASEEEQQTSLSSEEAV. Residues 327–345 are compositionally biased toward low complexity; that stretch reads ASTQASEEEQQTSLSSEEA. The RING-type zinc finger occupies 391–426; it reads CKICYGAEYNTAFLPCGHVVACAKCASSVTKCPLCR.

It belongs to the IAP family. As to quaternary structure, interacts (via BIR 2 domain) with Dronc (via residues 114-125). Rpr, hid and grim can outcompete Dronc for binding Diap1 therefore removing Diap1-mediated ubiquitination. Interacts (via BIR 2 domain) with HtrA2; this displaces any bound Dronc. Interacts with Strica. The N-terminally cleaved form interacts with Ubr3 (via UBR-type zinc finger); the interaction promotes the recruitment and uniquitination of substrate capases such as Dronc. Post-translationally, ubiquitinated and degraded by HtrA2 in apoptotic cells; proteolytic cleavage at specific sites in the BIR domain linker region generating inactive fragments. Mutation of one site reduces but does not abolish cleavage as another site is selected by the protease.

It carries out the reaction S-ubiquitinyl-[E2 ubiquitin-conjugating enzyme]-L-cysteine + [acceptor protein]-L-lysine = [E2 ubiquitin-conjugating enzyme]-L-cysteine + N(6)-ubiquitinyl-[acceptor protein]-L-lysine.. Anti-apoptotic protein which functions as a caspase regulator, using its E3 ubiquitin-protein ligase activity to smother caspase activity. Binds, ubiquitinates and inactivates initiator caspase Dronc, and effector caspases Drice and Dcp-1. Acts as a Nedd8-E3 ubiquitin-protein ligase for Drice. Suppresses apoptosis by targeting the apoptosome for ubiquitination and inactivation. Plays an important role in cell motility. Overexpression suppresses rpr and hid-dependent cell death in the eye. Interaction of Diap1 with Dronc is required to suppress Dronc-mediated cell death through Diap1-mediated ubiquitination of Dronc. Acts as a positive regulator of Wnt signaling. The sequence is that of Death-associated inhibitor of apoptosis 1 (Diap1) from Drosophila melanogaster (Fruit fly).